A 176-amino-acid polypeptide reads, in one-letter code: NAD(P)H-quinone oxidoreductase subunit 6, chloroplastic (176 aa).

A run of 5 helical transmembrane segments spans residues 10–30 (FLLVFLELGLILGSLGVVFLP), 33–53 (IYSAFSLGLVLFCISLFYILL), 61–81 (AQLLIYVGAINVLIIFAVMFM), 92–112 (LWTVGDGVTSMVCTSLFISLI), and 153–173 (FLPFELISIILLVALIGAIAI).

This sequence belongs to the complex I subunit 6 family. In terms of assembly, NDH is composed of at least 16 different subunits, 5 of which are encoded in the nucleus.

It is found in the plastid. It localises to the chloroplast thylakoid membrane. The enzyme catalyses a plastoquinone + NADH + (n+1) H(+)(in) = a plastoquinol + NAD(+) + n H(+)(out). The catalysed reaction is a plastoquinone + NADPH + (n+1) H(+)(in) = a plastoquinol + NADP(+) + n H(+)(out). NDH shuttles electrons from NAD(P)H:plastoquinone, via FMN and iron-sulfur (Fe-S) centers, to quinones in the photosynthetic chain and possibly in a chloroplast respiratory chain. The immediate electron acceptor for the enzyme in this species is believed to be plastoquinone. Couples the redox reaction to proton translocation, and thus conserves the redox energy in a proton gradient. The protein is NAD(P)H-quinone oxidoreductase subunit 6, chloroplastic (ndhG) of Jasminum nudiflorum (Winter jasmine).